A 283-amino-acid chain; its full sequence is Pre-mRNA-splicing factor CWC23 (283 aa).

The 73-residue stretch at 15-87 (NLYDVLELPT…DVRPHYDRWL (73 aa)) folds into the J domain.

This sequence belongs to the DnaJ family. In terms of assembly, belongs to the CWC complex (or CEF1-associated complex), a spliceosome sub-complex reminiscent of a late-stage spliceosome composed of the U2, U5 and U6 snRNAs and at least BUD13, BUD31, BRR2, CDC40, CEF1, CLF1, CUS1, CWC2, CWC15, CWC21, CWC22, CWC23, CWC24, CWC25, CWC27, ECM2, HSH155, IST3, ISY1, LEA1, MSL1, NTC20, PRP8, PRP9, PRP11, PRP19, PRP21, PRP22, PRP45, PRP46, SLU7, SMB1, SMD1, SMD2, SMD3, SMX2, SMX3, SNT309, SNU114, SPP2, SYF1, SYF2, RSE1 and YJU2.

It is found in the cytoplasm. Its subcellular location is the nucleus. Involved in pre-mRNA splicing. May be involved in endoplasmic reticulum-associated protein degradation (ERAD) and required for growth at low and high temperatures. The protein is Pre-mRNA-splicing factor CWC23 (CWC23) of Saccharomyces cerevisiae (strain ATCC 204508 / S288c) (Baker's yeast).